The following is a 371-amino-acid chain: Surface protein P12p (371 aa).

Positions 1-20 (MHIVSFIIFFFALFFPISIC) are cleaved as a signal peptide. 2 6-Cys domains span residues 23 to 168 (INGV…LKKN) and 169 to 343 (ILYG…FSNQ). 4 disulfide bridges follow: cysteine 27–cysteine 62, cysteine 76–cysteine 144, cysteine 93–cysteine 142, and cysteine 173–cysteine 245. N-linked (GlcNAc...) asparagine glycosylation is present at asparagine 184. Residues 202–239 (GNNNNDDDNNDDDNNNDNNNNDNNNNNNNNNNNNNNNN) form a disordered region. Over residues 206–216 (NDDDNNDDDNN) the composition is skewed to acidic residues. Over residues 217–239 (NDNNNNDNNNNNNNNNNNNNNNN) the composition is skewed to low complexity. N-linked (GlcNAc...) asparagine glycosylation is found at asparagine 242 and asparagine 246. 2 disulfide bridges follow: cysteine 260-cysteine 323 and cysteine 271-cysteine 321.

The protein localises to the cell surface. It localises to the cell membrane. In Plasmodium falciparum (isolate 3D7), this protein is Surface protein P12p (PFS12P).